The following is a 414-amino-acid chain: Argininosuccinate synthase (414 aa).

ATP is bound by residues 9–17 (AYSGGLDTS) and Ala-35. Positions 86 and 91 each coordinate L-citrulline. 114–122 (SHGATGKGN) provides a ligand contact to ATP. Residues Thr-118, Asn-122, and Asp-123 each contribute to the L-aspartate site. Position 122 (Asn-122) interacts with L-citrulline. L-citrulline contacts are provided by Arg-126, Ser-179, Ser-188, Glu-269, and Tyr-281.

The protein belongs to the argininosuccinate synthase family. As to quaternary structure, homotetramer.

It is found in the cytoplasm. The protein localises to the cytosol. The enzyme catalyses L-citrulline + L-aspartate + ATP = 2-(N(omega)-L-arginino)succinate + AMP + diphosphate + H(+). It functions in the pathway amino-acid biosynthesis; L-arginine biosynthesis; L-arginine from L-ornithine and carbamoyl phosphate: step 2/3. It participates in nitrogen metabolism; urea cycle; (N(omega)-L-arginino)succinate from L-aspartate and L-citrulline: step 1/1. Its function is as follows. One of the enzymes of the urea cycle, the metabolic pathway transforming neurotoxic amonia produced by protein catabolism into inocuous urea in the liver of ureotelic animals. Catalyzes the formation of arginosuccinate from aspartate, citrulline and ATP and together with ASL it is responsible for the biosynthesis of arginine in most body tissues. In Danio rerio (Zebrafish), this protein is Argininosuccinate synthase.